Consider the following 393-residue polypeptide: Cysteine protease ATG4B (393 aa).

Methionine 1 is subject to N-acetylmethionine. Serine 34 is modified (phosphoserine; by PKB/AKT1 and PKB/AKT2). Cysteine 74 acts as the Nucleophile in catalysis. Cysteine 189 is subject to S-nitrosocysteine. Catalysis depends on residues aspartate 278 and histidine 280. 2 positions are modified to S-nitrosocysteine: cysteine 292 and cysteine 301. Residues cysteine 292 and cysteine 361 are joined by a disulfide bond. The residue at position 316 (serine 316) is a Phosphoserine; by ULK1. Serine 383 carries the post-translational modification Phosphoserine; by STK26. Residues 388-391 (FEIL) carry the LIR motif. Position 392 is a phosphoserine (serine 392).

This sequence belongs to the peptidase C54 family. As to quaternary structure, interacts with PFKP; promoting phosphorylation of ATG4B at Ser-34. Interacts with GBP7. Phosphorylation at Ser-383 and Ser-392 promotes autophagy by increasing protein delipidation activity without affecting proteolytic activation of ATG8 proteins. Phosphorylation at Ser-316 by ULK1 inhibits autophagy by decreasing both proteolytic activation and delipidation activities. Phosphorylation at Ser-316 is dephosphorylated by protein phosphatase 2A (PP2A). Phosphorylation at Ser-34 by AKT2 promotes its hydrolase activity, leading to increased proteolytic activation and delipidation of ATG8 family proteins. Phosphorylation at Ser-34 by AKT1 promotes mitochondrial localization and inhibition of the F1F0-ATP synthase activity, leading to elevation of mitochondrial reactive oxygen species (ROS). Post-translationally, ubiquitinated by RNF5, leading to its degradation by the proteasome. In terms of processing, S-nitrosylation at Cys-189 and Cys-292 in response to high glucose decreases both proteolytic activation and delipidation activities. O-glycosylated by OGT, leading to increase protease activity, thereby promoting the proteolytic activation of ATG8 family proteins. Post-translationally, forms reversible intrachain disulfide bonds in response to oxidative stress. Forms interchain disulfide bonds, leading to formation of homooligomers in response to oxidation.

It is found in the cytoplasm. Its subcellular location is the cytosol. The protein resides in the cytoplasmic vesicle. It localises to the autophagosome. The protein localises to the endoplasmic reticulum. It is found in the mitochondrion. It carries out the reaction [protein]-C-terminal L-amino acid-glycyl-phosphatidylethanolamide + H2O = [protein]-C-terminal L-amino acid-glycine + a 1,2-diacyl-sn-glycero-3-phosphoethanolamine. The catalysed reaction is [protein]-C-terminal L-amino acid-glycyl-phosphatidylserine + H2O = [protein]-C-terminal L-amino acid-glycine + a 1,2-diacyl-sn-glycero-3-phospho-L-serine. Its activity is regulated as follows. Inhibited by N-ethylmaleimide. Redox-regulated during autophagy since reducing conditions activate ATG4A whereas an oxidizing environment such as the presence of H(2)O(2) inhibits its activity. The cysteine protease activity compounds is inhibited by styrylquinoline compounds 4-28 and LV-320. Functionally, cysteine protease that plays a key role in autophagy by mediating both proteolytic activation and delipidation of ATG8 family proteins. Required for canonical autophagy (macroautophagy), non-canonical autophagy as well as for mitophagy. The protease activity is required for proteolytic activation of ATG8 family proteins: cleaves the C-terminal amino acid of ATG8 proteins MAP1LC3A, MAP1LC3B, MAP1LC3C, GABARAPL1, GABARAPL2 and GABARAP, to reveal a C-terminal glycine. Exposure of the glycine at the C-terminus is essential for ATG8 proteins conjugation to phosphatidylethanolamine (PE) and insertion to membranes, which is necessary for autophagy. Protease activity is also required to counteract formation of high-molecular weight conjugates of ATG8 proteins (ATG8ylation): acts as a deubiquitinating-like enzyme that removes ATG8 conjugated to other proteins, such as ATG3. In addition to the protease activity, also mediates delipidation of ATG8 family proteins. Catalyzes delipidation of PE-conjugated forms of ATG8 proteins during macroautophagy. Also involved in non-canonical autophagy, a parallel pathway involving conjugation of ATG8 proteins to single membranes at endolysosomal compartments, by catalyzing delipidation of ATG8 proteins conjugated to phosphatidylserine (PS). Compared to other members of the family (ATG4A, ATG4C or ATG4C), constitutes the major protein for proteolytic activation of ATG8 proteins, while it displays weaker delipidation activity than other ATG4 paralogs. Involved in phagophore growth during mitophagy independently of its protease activity and of ATG8 proteins: acts by regulating ATG9A trafficking to mitochondria and promoting phagophore-endoplasmic reticulum contacts during the lipid transfer phase of mitophagy. The protein is Cysteine protease ATG4B of Homo sapiens (Human).